A 221-amino-acid chain; its full sequence is Vesicle-associated membrane protein 714 (221 aa).

Alanine 2 carries the N-acetylalanine modification. Over 2–190 (AIVYAVVARG…RRALWMKNAK (189 aa)) the chain is Cytoplasmic. A Longin domain is found at 7–112 (VVARGTVVLA…AMNDEFSRVL (106 aa)). The 61-residue stretch at 127 to 187 (TLNRVRGEVS…KRLRRALWMK (61 aa)) folds into the v-SNARE coiled-coil homology domain. The chain crosses the membrane as a helical; Anchor for type IV membrane protein span at residues 191 to 211 (LLVLLTCLIVFLLYIIIASFC). Over 212–221 (GGITLPSCRS) the chain is Vesicular.

This sequence belongs to the synaptobrevin family. In terms of tissue distribution, highly expressed in leaves, stems and roots. Detected in flowers.

Its subcellular location is the golgi apparatus membrane. Involved in the targeting and/or fusion of transport vesicles to their target membrane. This chain is Vesicle-associated membrane protein 714, found in Arabidopsis thaliana (Mouse-ear cress).